A 171-amino-acid chain; its full sequence is Ribosome maturation factor RimP (171 aa).

It belongs to the RimP family.

It is found in the cytoplasm. Its function is as follows. Required for maturation of 30S ribosomal subunits. In Anaeromyxobacter sp. (strain Fw109-5), this protein is Ribosome maturation factor RimP.